Reading from the N-terminus, the 94-residue chain is Selenoprotein K (94 aa).

A helical transmembrane segment spans residues 20 to 42 (LSFITDFFWGIAEFVVLFFRTLL). The segment at 48–94 (KRRGYGGSSDSRYDDGRGPPGNPPRRMGRINHLRGPNPPPMAGGUGR) is disordered. Sec-92 is a non-standard amino acid (selenocysteine).

It belongs to the selenoprotein K family. Interacts with DERL1, DERL2, DERL3 and SELENOS. The SELENOK-SELENOS complex interacts with VCP. Interacts with ZDHHC6. Cleaved by CAPN2/m-calpain in resting macrophages but not in activated macrophages. Macrophage activation up-regulates expression of the calpain inhibitor CAST/calpastatin, resulting in inhibition of CAPN2 activity. Post-translationally, truncated SELENOK proteins produced by failed UGA/Sec decoding are ubiquitinated by the CRL2(KLHDC2) complex, which recognizes the diglycine (Gly-Gly) at the C-terminus of truncated SELENOK proteins.

It localises to the endoplasmic reticulum membrane. It is found in the cell membrane. Functionally, required for Ca(2+) flux in immune cells and plays a role in T-cell proliferation and in T-cell and neutrophil migration. Involved in endoplasmic reticulum-associated degradation (ERAD) of soluble glycosylated proteins. Required for palmitoylation and cell surface expression of CD36 and involved in macrophage uptake of low-density lipoprotein and in foam cell formation. Together with ZDHHC6, required for palmitoylation of ITPR1 in immune cells, leading to regulate ITPR1 stability and function. Plays a role in protection of cells from ER stress-induced apoptosis. Protects cells from oxidative stress when overexpressed in cardiomyocytes. In Sus scrofa (Pig), this protein is Selenoprotein K.